The primary structure comprises 244 residues: Transcriptional regulatory protein YpdB (244 aa).

The Response regulatory domain occupies 2–116 (KVIIVEDEFL…RITGMLQKLE (115 aa)). At D53 the chain carries 4-aspartylphosphate. One can recognise an HTH LytTR-type domain in the interval 139-244 (INLVKDERII…VKEFRQLMHL (106 aa)).

In terms of processing, phosphorylated by YpdA.

The protein localises to the cytoplasm. In terms of biological role, member of the two-component regulatory system YpdA/YpdB. YpdB regulates expression of yhjX by binding to its promoter region. The chain is Transcriptional regulatory protein YpdB (ypdB) from Escherichia coli O157:H7.